The primary structure comprises 163 residues: Nucleotide-binding protein YajQ (163 aa).

Belongs to the YajQ family.

In terms of biological role, nucleotide-binding protein. The polypeptide is Nucleotide-binding protein YajQ (Escherichia coli O127:H6 (strain E2348/69 / EPEC)).